Here is a 2642-residue protein sequence, read N- to C-terminus: Fusarielin synthase FSL1 (2642 aa).

Residues 6 to 450 (NEPIAIIGTG…GTNAHAILEA (445 aa)) form the Ketosynthase family 3 (KS3) domain. Active-site for beta-ketoacyl synthase activity residues include Cys-179, His-318, and His-370. Residues 566–890 (VFTGQGAQWA…PYTSALVRGK (325 aa)) form a malonyl-CoA:ACP transacylase (MAT) domain region. Residue Ser-659 is the For malonyltransferase activity of the active site. The interval 965 to 1101 (HDLLGIQTAD…GKVCIFLQTE (137 aa)) is N-terminal hotdog fold. The tract at residues 965–1279 (HDLLGIQTAD…SFSPFAAATD (315 aa)) is dehydratase (DH) domain. The PKS/mFAS DH domain occupies 965 to 1280 (HDLLGIQTAD…FSPFAAATDR (316 aa)). His-997 acts as the Proton acceptor; for dehydratase activity in catalysis. Positions 1126-1280 (MAGIDVERFY…FSPFAAATDR (155 aa)) are C-terminal hotdog fold. Asp-1189 functions as the Proton donor; for dehydratase activity in the catalytic mechanism. The tract at residues 1423–1622 (NYLDRYYTHA…GVDTNTPMPD (200 aa)) is methyltransferase (MET) domain. The ketoreductase (KR) domain stretch occupies residues 2244 to 2423 (TYWMLGLTGD…GHNAAVIDIS (180 aa)). The region spanning 2556–2635 (QEVTSVLTSC…DLADYILESL (80 aa)) is the Carrier domain. Position 2595 is an O-(pantetheine 4'-phosphoryl)serine (Ser-2595).

Pantetheine 4'-phosphate is required as a cofactor.

It participates in secondary metabolite biosynthesis. Functionally, reducing polyketide synthase; part of the gene cluster that mediates the biosynthesis of fusarielins F, G and H, decaketide compounds with 5 methylations and a decaline core that act as mycoestrogens as they stimulate growth of MCF-7 breast cancer cells. The initial compound in the pathway is produced by the reducing polyketide synthase FSL1. FSL1 lacks an active enoyl reductase (ER) domain and biosynthesis of fusarielins relies on the trans-acting enoyl reductase FSL5, before it is released through hydrolysis catalyzed by the thioesterase FSL2. Fusarielins F, G, and H have a C11=C12 cis double bond and is fully reduced between C10 and C11 and between C12 and C13. FSL3 can be involved in the formation of the C11=C12 cis double bond by moving a hypothetical C10=C11 or C12=C13 trans double bond to form prefusarielin. Prefusarielin is oxygenated at C15 and C16 by the cytochrome P450 monooxygenase FSL4, resulting in fusarielin F, which subsequently is epoxidized into fusarielin G by the same enzyme. The final step in the pathway is a reduction of the carboxylic acid moiety to yield fusarielin H via a still undetermined mechanism. The chain is Fusarielin synthase FSL1 from Gibberella zeae (strain ATCC MYA-4620 / CBS 123657 / FGSC 9075 / NRRL 31084 / PH-1) (Wheat head blight fungus).